Reading from the N-terminus, the 201-residue chain is Oligoribonuclease (201 aa).

The region spanning 20 to 183 (LVWLDMEMTG…ADIHESIDEL (164 aa)) is the Exonuclease domain. Y141 is a catalytic residue.

It belongs to the oligoribonuclease family.

It is found in the cytoplasm. 3'-to-5' exoribonuclease specific for small oligoribonucleotides. The sequence is that of Oligoribonuclease from Burkholderia mallei (strain NCTC 10229).